A 106-amino-acid chain; its full sequence is ATP-dependent Clp protease adapter protein ClpS (106 aa).

The protein belongs to the ClpS family. In terms of assembly, binds to the N-terminal domain of the chaperone ClpA.

Involved in the modulation of the specificity of the ClpAP-mediated ATP-dependent protein degradation. This is ATP-dependent Clp protease adapter protein ClpS from Vibrio cholerae serotype O1 (strain ATCC 39541 / Classical Ogawa 395 / O395).